The following is a 450-amino-acid chain: uncharacterized protein (450 aa).

Residues 141 to 151 (WLDKTDGEKNS) show a composition bias toward basic and acidic residues. Disordered stretches follow at residues 141-171 (WLDKTDGEKNSEASSTDNSLENSTKGADSAG), 276-298 (LQDSENVQGDKGEKESKDDAVSQ), and 395-416 (DDEDEDNVDNSEGDEESLLSRN). Polar residues predominate over residues 152 to 171 (EASSTDNSLENSTKGADSAG). Basic and acidic residues predominate over residues 283–298 (QGDKGEKESKDDAVSQ). Over residues 395-411 (DDEDEDNVDNSEGDEES) the composition is skewed to acidic residues.

This is an uncharacterized protein from Saccharomyces cerevisiae (strain ATCC 204508 / S288c) (Baker's yeast).